The primary structure comprises 96 residues: Fruit-specific protein (96 aa).

3 disulfide bridges follow: C59–C75, C63–C78, and C69–C92.

As to expression, fruit specific.

The chain is Fruit-specific protein (2A11) from Solanum lycopersicum (Tomato).